Consider the following 136-residue polypeptide: Protein PsiE homolog (136 aa).

4 helical membrane-spanning segments follow: residues 15 to 35 (ILQT…VVFL), 55 to 75 (YELV…ALIV), 82 to 102 (FHFP…RLII), and 108 to 128 (PLDV…LWLC).

It belongs to the PsiE family.

The protein resides in the cell inner membrane. This chain is Protein PsiE homolog, found in Enterobacter sp. (strain 638).